An 80-amino-acid chain; its full sequence is Cytochrome c oxidase subunit 7A1, mitochondrial (80 aa).

The N-terminal 21 residues, 1–21 (MRALRVSQALVRSFSSTARNR), are a transit peptide targeting the mitochondrion. The Mitochondrial matrix segment spans residues 22-46 (FENRVAEKQKLFQEDNGLPVHLKGG). A helical membrane pass occupies residues 47–75 (ATDNILYRVTMTLCLGGTLYSLYCLGWAS). The Mitochondrial intermembrane portion of the chain corresponds to 76 to 80 (FPHKK).

The protein belongs to the cytochrome c oxidase VIIa family. As to quaternary structure, component of the complex IV (CIV, cytochrome c oxidase), a multisubunit enzyme composed of 14 subunits. The complex is composed of a catalytic core of 3 subunits MT-CO1, MT-CO2 and MT-CO3, encoded in the mitochondrial DNA, and 11 supernumerary subunits COX4I1 (or COX4I2), COX5A, COX5B, COX6A2 (or COX6A1), COX6B1 (or COX6B2), COX6C, COX7A1 (or COX7A2), COX7B, COX7C, COX8B and NDUFA4, which are encoded in the nuclear genome. The complex exists as a monomer or a dimer and forms supercomplexes (SCs) in the inner mitochondrial membrane with NADH-ubiquinone oxidoreductase (complex I, CI) and ubiquinol-cytochrome c oxidoreductase (cytochrome b-c1 complex, complex III, CIII), resulting in different assemblies (supercomplex SCI(1)III(2)IV(1) and megacomplex MCI(2)III(2)IV(2)).

The protein resides in the mitochondrion inner membrane. It participates in energy metabolism; oxidative phosphorylation. In terms of biological role, component of the mitochondrial respiratory complex IV (CIV, also named cytochrome c oxidase complex), the last enzyme in the mitochondrial electron transport chain which drives oxidative phosphorylation. The CIV complex is the component of the respiratory chain that catalyzes the reduction of oxygen to water. Acts as an assembly factor that specifically drives the homodimerization of CIV complexes, mediating the formation of mitochondrial respiratory supercomplexes (respirasomes) containing two CIV: supercomplxes with two molecules of CIV show improved activity. Despite being highly expressed in brown adipose tissue, not required for thermogenesis. This is Cytochrome c oxidase subunit 7A1, mitochondrial (COX7A1) from Bos taurus (Bovine).